Here is an 80-residue protein sequence, read N- to C-terminus: ATP synthase subunit c (80 aa).

Helical transmembrane passes span 11 to 31 and 53 to 73; these read IAAAMMMGLAAIGASIGIGIL and FFIVMGLVDAIPMIAVGLGLY.

This sequence belongs to the ATPase C chain family. As to quaternary structure, F-type ATPases have 2 components, F(1) - the catalytic core - and F(0) - the membrane proton channel. F(1) has five subunits: alpha(3), beta(3), gamma(1), delta(1), epsilon(1). F(0) has three main subunits: a(1), b(2) and c(10-14). The alpha and beta chains form an alternating ring which encloses part of the gamma chain. F(1) is attached to F(0) by a central stalk formed by the gamma and epsilon chains, while a peripheral stalk is formed by the delta and b chains.

Its subcellular location is the cell inner membrane. In terms of biological role, f(1)F(0) ATP synthase produces ATP from ADP in the presence of a proton or sodium gradient. F-type ATPases consist of two structural domains, F(1) containing the extramembraneous catalytic core and F(0) containing the membrane proton channel, linked together by a central stalk and a peripheral stalk. During catalysis, ATP synthesis in the catalytic domain of F(1) is coupled via a rotary mechanism of the central stalk subunits to proton translocation. Functionally, key component of the F(0) channel; it plays a direct role in translocation across the membrane. A homomeric c-ring of between 10-14 subunits forms the central stalk rotor element with the F(1) delta and epsilon subunits. This Aeromonas hydrophila subsp. hydrophila (strain ATCC 7966 / DSM 30187 / BCRC 13018 / CCUG 14551 / JCM 1027 / KCTC 2358 / NCIMB 9240 / NCTC 8049) protein is ATP synthase subunit c.